Reading from the N-terminus, the 268-residue chain is Interleukin-1 beta (268 aa).

The propeptide occupies 1-116; sequence MATVPELNCE…WDDDDLLVCD (116 aa).

Belongs to the IL-1 family. Monomer. In its precursor form, weakly interacts with full-length MEFV; the mature cytokine does not interact at all. Interacts with integrins ITGAV:ITGBV and ITGA5:ITGB1; integrin-binding is required for IL1B signaling. Interacts with cargo receptor TMED10; the interaction is direct and is required for the secretion of IL1B mature form. Interacts with HSP90AB1; the interaction facilitates cargo translocation into the ERGIC. Interacts with HSP90B1; the interaction facilitates cargo translocation into the ERGIC.

The protein localises to the cytoplasm. It is found in the cytosol. Its subcellular location is the secreted. It localises to the lysosome. The protein resides in the extracellular exosome. Its function is as follows. Potent pro-inflammatory cytokine. Initially discovered as the major endogenous pyrogen, induces prostaglandin synthesis, neutrophil influx and activation, T-cell activation and cytokine production, B-cell activation and antibody production, and fibroblast proliferation and collagen production. Promotes Th17 differentiation of T-cells. Synergizes with IL12/interleukin-12 to induce IFNG synthesis from T-helper 1 (Th1) cells. Plays a role in angiogenesis by inducing VEGF production synergistically with TNF and IL6. Involved in transduction of inflammation downstream of pyroptosis: its mature form is specifically released in the extracellular milieu by passing through the gasdermin-D (GSDMD) pore. In Rattus norvegicus (Rat), this protein is Interleukin-1 beta.